The chain runs to 658 residues: Scarecrow-like protein 28 (658 aa).

Disordered stretches follow at residues 43–85, 96–115, and 209–265; these read PCSS…TSGC, LATT…NNNR, and PAAV…NNNR. Positions 214–228 are enriched in low complexity; the sequence is EASGGSSTSASSESR. One can recognise a GRAS domain in the interval 265 to 654; that stretch reads RNDLQRDFEL…QPLYTISAWT (390 aa). The leucine repeat I (LRI) stretch occupies residues 272 to 336; that stretch reads FELVNLLTGC…VARMWPHIFH (65 aa). Positions 355–420 are VHIID; the sequence is LRFLNQVTPI…NPPHHVRITG (66 aa). Residues 386-390 carry the VHIID motif; that stretch reads VHIID. A leucine repeat II (LRII) region spans residues 430-462; that stretch reads ETGDRLHGFAEAMNLQFEFHPVVDRLEDVRLWM. The PFYRE stretch occupies residues 471 to 563; that stretch reads VAVNCVMQMH…EMLFGREIRN (93 aa). The SAW stretch occupies residues 566 to 654; sequence ACEGSHRQER…QPLYTISAWT (89 aa).

This sequence belongs to the GRAS family. Interacts with SNRNP35 and CYP95. In terms of tissue distribution, expressed in roots and sepals.

Its subcellular location is the nucleus. Probable transcription factor involved in plant development. The sequence is that of Scarecrow-like protein 28 (SCL28) from Arabidopsis thaliana (Mouse-ear cress).